The following is a 240-amino-acid chain: Small ribosomal subunit protein uS2 (240 aa).

Belongs to the universal ribosomal protein uS2 family.

The chain is Small ribosomal subunit protein uS2 (rpsB) from Pasteurella multocida (strain Pm70).